The following is a 442-amino-acid chain: 3-isopropylmalate dehydratase large subunit (442 aa).

[4Fe-4S] cluster-binding residues include cysteine 347, cysteine 407, and cysteine 410.

It belongs to the aconitase/IPM isomerase family. LeuC type 1 subfamily. As to quaternary structure, heterodimer of LeuC and LeuD. [4Fe-4S] cluster serves as cofactor.

It carries out the reaction (2R,3S)-3-isopropylmalate = (2S)-2-isopropylmalate. It participates in amino-acid biosynthesis; L-leucine biosynthesis; L-leucine from 3-methyl-2-oxobutanoate: step 2/4. Catalyzes the isomerization between 2-isopropylmalate and 3-isopropylmalate, via the formation of 2-isopropylmaleate. The sequence is that of 3-isopropylmalate dehydratase large subunit from Buchnera aphidicola subsp. Uroleucon helianthicola.